A 307-amino-acid polypeptide reads, in one-letter code: Inner spore coat protein H-like protein (307 aa).

This sequence belongs to the CotH family.

The protein localises to the spore coat. Its function is as follows. Involved in the assembly of several proteins in the inner and outer layer of the spore coat. This chain is Inner spore coat protein H-like protein (yisJ), found in Bacillus subtilis (strain 168).